A 60-amino-acid chain; its full sequence is Protein AC4 (60 aa).

It belongs to the geminiviridae protein AC4/C4 family.

Its function is as follows. Pathogenicity determinant. May act as a suppressor of RNA-mediated gene silencing, also known as post-transcriptional gene silencing (PTGS), a mechanism of plant viral defense that limits the accumulation of viral RNAs. The sequence is that of Protein AC4 from Pepper huasteco yellow vein virus (PHYVV).